The primary structure comprises 1096 residues: Inactive phospholipase C-like protein 1 (1096 aa).

Residues 1 to 101 (MAEGAASREA…KKTVSFSSMP (101 aa)) form a disordered region. Positions 26–41 (GADAASGDAAPEASGG) are enriched in low complexity. Phosphoserine occurs at positions 48 and 78. The tract at residues 83–222 (PSNQKCGGRK…NIWVSGLRYL (140 aa)) is interaction with PPP1C. Position 94 is a phosphothreonine (Thr94). Position 96 is a phosphoserine (Ser96). One can recognise a PH domain in the interval 114–224 (SFMQAGCELK…WVSGLRYLVS (111 aa)). A PI-PLC X-box domain is found at 399 to 543 (QDMTQPLSHY…LKHMIIVKGK (145 aa)). An interaction with GABA A beta subunit region spans residues 544-568 (KLPSESDLLEGEVTDEDEEAEMSRR). Phosphothreonine is present on Thr557. Ser570 is modified (phosphoserine). One can recognise a PI-PLC Y-box domain in the interval 586 to 702 (LSDLVSICKS…GYVLRPSIMR (117 aa)). The 130-residue stretch at 702 to 831 (RDEVSYFSAN…PGYRHVPLRS (130 aa)) folds into the C2 domain. The stretch at 1040–1060 (DLLKNAKNEAVENIKQIQLAC) forms a coiled coil. The disordered stretch occupies residues 1067–1096 (KGPGSAAEAKGKRSLEAIEEKESSEENGKL). Residues 1075 to 1096 (AKGKRSLEAIEEKESSEENGKL) are compositionally biased toward basic and acidic residues. Ser1080 is modified (phosphoserine).

Belongs to the PRIP family. In terms of assembly, interacts with PPP2CA, GABA receptor beta subunits, GABA receptor gamma-2 subunits. Interacts with Ins(1,4,5)P3, Ins(1,4,5,6)P4, GABARAP, and PPP1C. May form a ternary complex with GABA receptor beta subunit and GABARAP. The formation of a ternary complex with GABA receptor beta subunit and GABARAP could be the key step for facilitating the association of GABARAP with the GABA receptor gamma-2 subunit and to allow it to be transported at the right destination. In terms of processing, phosphorylation of Thr-94 resulted in dissociation of PPP1C from PRIP1. In vitro, phosphorylated by the catalytic subunit of PKA. In terms of tissue distribution, expressed in brain. Found in the granular cell and Purkinje cell layers in the cerebellum; and in the hippocampal pyramidal cells, dentate granule cells and pyramidal granule cells of the cerebral cortex in the cerebrum.

The protein localises to the cytoplasm. Involved in an inositol phospholipid-based intracellular signaling cascade. Shows no PLC activity to phosphatidylinositol 4,5-bisphosphate and phosphatidylinositol. Component in the phospho-dependent endocytosis process of GABA A receptor. Acts as an inhibitor of PPP1C. This Rattus norvegicus (Rat) protein is Inactive phospholipase C-like protein 1 (Plcl1).